Here is a 1023-residue protein sequence, read N- to C-terminus: DNA polymerase (1023 aa).

The interval 726–751 is disordered; that stretch reads QTDATRKHRQCTPTSNSSSDEDAPFY.

This sequence belongs to the DNA polymerase type-B family. In terms of assembly, heterodimer with the terminal protein; this heterodimer binds to bp 9 to 18 of the genome. Forms a complex with viral pTP, DBP and hosts NFIA and POU2F1/OCT1 for initiation of replication.

It is found in the host nucleus. The enzyme catalyses DNA(n) + a 2'-deoxyribonucleoside 5'-triphosphate = DNA(n+1) + diphosphate. In terms of biological role, eukaryotic-type DNA polymerase involved in viral genomic replication. DNA synthesis is protein primed, and acts in a strand displacement replication. Assembles in complex with viral pTP, DBP, host NFIA and host POU2F1/OCT1 on viral origin of replication. The polymerase covalently transfers dCMP onto pTP, thereby initiating complementary strand synthesis. The polypeptide is DNA polymerase (Bovine adenovirus B serotype 3 (BAdV-3)).